The following is a 274-amino-acid chain: Large ribosomal subunit protein uL2cz/uL2cy (274 aa).

2 disordered regions span residues M1–S24 and M223–K274. Positions K7–S24 are enriched in polar residues.

This sequence belongs to the universal ribosomal protein uL2 family. As to quaternary structure, part of the 50S ribosomal subunit.

It is found in the plastid. The protein resides in the chloroplast. The protein is Large ribosomal subunit protein uL2cz/uL2cy (rpl2-A) of Nicotiana sylvestris (Wood tobacco).